A 288-amino-acid chain; its full sequence is MRIRVPATTANLGPGFDSCGLALTLYLTLDIGAEADSWYIEHNIGGGIPHDETNVIIETALNLAPNLTPHHLVMTCDIPPARGLGSSSAAVVAGIELANTLAELKLSKEEKVRIAAEIEGHPDNVAPAVLGNWVVGAKLDGEDFYVRHLFPDCALIAFIPKAELLTSESRGVLPDTLPFKEAVQASSIANVMIAAILRNDMALAGEMMERDLWHEKYRSQLVPHLTQIRDVAKSQGAYAACLSGAGPTVLVFAPRNLANTLQTSLQTLEIDADVLLLDVEGSGAEVFR.

79 to 89 (PPARGLGSSSA) contacts ATP.

The protein belongs to the GHMP kinase family. Homoserine kinase subfamily.

The protein resides in the cytoplasm. The enzyme catalyses L-homoserine + ATP = O-phospho-L-homoserine + ADP + H(+). It functions in the pathway amino-acid biosynthesis; L-threonine biosynthesis; L-threonine from L-aspartate: step 4/5. Catalyzes the ATP-dependent phosphorylation of L-homoserine to L-homoserine phosphate. The sequence is that of Homoserine kinase from Listeria monocytogenes serotype 4b (strain CLIP80459).